The primary structure comprises 207 residues: Ribosomal RNA large subunit methyltransferase E (207 aa).

Residues 1 to 20 (MKRDPTKGRKTPDHYARKAK) form a disordered region. The S-adenosyl-L-methionine site is built by Gly-56, Trp-58, Asp-76, Asp-94, and Asp-116. Lys-156 (proton acceptor) is an active-site residue.

It belongs to the class I-like SAM-binding methyltransferase superfamily. RNA methyltransferase RlmE family.

The protein resides in the cytoplasm. It carries out the reaction uridine(2552) in 23S rRNA + S-adenosyl-L-methionine = 2'-O-methyluridine(2552) in 23S rRNA + S-adenosyl-L-homocysteine + H(+). Specifically methylates the uridine in position 2552 of 23S rRNA at the 2'-O position of the ribose in the fully assembled 50S ribosomal subunit. This chain is Ribosomal RNA large subunit methyltransferase E, found in Desulfosudis oleivorans (strain DSM 6200 / JCM 39069 / Hxd3) (Desulfococcus oleovorans).